The chain runs to 309 residues: Ribonuclease Z (309 aa).

Residues His63, His65, Asp67, His68, His145, Asp216, and His274 each coordinate Zn(2+). Asp67 serves as the catalytic Proton acceptor.

The protein belongs to the RNase Z family. In terms of assembly, homodimer. Requires Zn(2+) as cofactor.

The catalysed reaction is Endonucleolytic cleavage of RNA, removing extra 3' nucleotides from tRNA precursor, generating 3' termini of tRNAs. A 3'-hydroxy group is left at the tRNA terminus and a 5'-phosphoryl group is left at the trailer molecule.. In terms of biological role, zinc phosphodiesterase, which displays some tRNA 3'-processing endonuclease activity. Probably involved in tRNA maturation, by removing a 3'-trailer from precursor tRNA. This chain is Ribonuclease Z, found in Streptococcus agalactiae serotype Ia (strain ATCC 27591 / A909 / CDC SS700).